We begin with the raw amino-acid sequence, 305 residues long: 4-diphosphocytidyl-2-C-methyl-D-erythritol kinase (305 aa).

Residue Lys-17 is part of the active site. 111-121 (PVASGIGGGSA) lines the ATP pocket. Residue Asp-154 is part of the active site.

It belongs to the GHMP kinase family. IspE subfamily.

The enzyme catalyses 4-CDP-2-C-methyl-D-erythritol + ATP = 4-CDP-2-C-methyl-D-erythritol 2-phosphate + ADP + H(+). It functions in the pathway isoprenoid biosynthesis; isopentenyl diphosphate biosynthesis via DXP pathway; isopentenyl diphosphate from 1-deoxy-D-xylulose 5-phosphate: step 3/6. Functionally, catalyzes the phosphorylation of the position 2 hydroxy group of 4-diphosphocytidyl-2C-methyl-D-erythritol. The chain is 4-diphosphocytidyl-2-C-methyl-D-erythritol kinase from Gluconacetobacter diazotrophicus (strain ATCC 49037 / DSM 5601 / CCUG 37298 / CIP 103539 / LMG 7603 / PAl5).